Here is a 725-residue protein sequence, read N- to C-terminus: Glutamine-dependent NAD(+) synthetase (725 aa).

A CN hydrolase domain is found at 5–275; sequence VTVATCALNQ…VEVLTATLDL (271 aa). The active-site Proton acceptor; for glutaminase activity is Glu-45. The active-site For glutaminase activity is Lys-114. Cys-175 (nucleophile; for glutaminase activity) is an active-site residue. The segment at 325–706 is ligase; the sequence is YHRPEEEISL…KTSQTLEEQI (382 aa). 355 to 362 lines the ATP pocket; the sequence is PLSGGVDS. Residue Ser-357 is part of the active site.

It in the C-terminal section; belongs to the NAD synthetase family. Homohexamer.

The catalysed reaction is deamido-NAD(+) + L-glutamine + ATP + H2O = L-glutamate + AMP + diphosphate + NAD(+) + H(+). It functions in the pathway cofactor biosynthesis; NAD(+) biosynthesis; NAD(+) from deamido-NAD(+) (L-Gln route): step 1/1. Its function is as follows. Catalyzes the final step of the nicotinamide adenine dinucleotide (NAD) de novo synthesis pathway, the ATP-dependent amidation of deamido-NAD using L-glutamine as a nitrogen source. This is Glutamine-dependent NAD(+) synthetase (Nadsyn1) from Rattus norvegicus (Rat).